A 146-amino-acid chain; its full sequence is UPF0178 protein BCE33L2782 (146 aa).

It belongs to the UPF0178 family.

This chain is UPF0178 protein BCE33L2782, found in Bacillus cereus (strain ZK / E33L).